The primary structure comprises 276 residues: 3' cyclic ADP-D-ribose synthase HopAM1 (276 aa).

Polar residues predominate over residues 20-38 (VEASQVKSAGTSSTTNIDS). The tract at residues 20–39 (VEASQVKSAGTSSTTNIDSK) is disordered. Residues 165–214 (KNGIAHAKKMAFFITPEWLGSDFCKQEFQWLSETKNKDIKSAFVIFKDVD) form a TIR domain region. Q190 is an active-site residue.

As to quaternary structure, homodimer.

The protein resides in the host cytoplasm. It is found in the host cytosol. It catalyses the reaction NAD(+) = 3'cADPR + nicotinamide + H(+). Its function is as follows. NAD(+) hydrolase (NADase) that cleaves NAD(+) into nicotinamide and 3' cyclic ADP-D-ribose (3'cADPR, v2-cADPR). Upon infiltration of A.thaliana with this bacteria an effector-triggered immunity-like phenotype (ETI-like, cell death with severe chlorosis) is seen, 3'cADPR levels rise while NAD(+) levels remain constant. Plant immune responses are suppressed. Triggers hypersensitive response-like cell death in Nicotiana tabacum cv. Xanthi and N.benthamiana when transiently expressed, depletes NAD(+) in N.benthamiana. Causes cell death upon induction in yeast due to NAD(+) depletion and/or 3'cADPR itself. Transgenic A.thaliana expressing HopAM1 suppresses its plant immune system upon challenge; the plants produce 3'cADPR without significantly depleting NAD(+). The sequence is that of 3' cyclic ADP-D-ribose synthase HopAM1 from Pseudomonas syringae pv. tomato (strain ATCC BAA-871 / DC3000).